The primary structure comprises 283 residues: N-terminal Xaa-Pro-Lys N-methyltransferase 2 (283 aa).

S-adenosyl-L-methionine contacts are provided by residues Gly124, Arg129, Asp146, 174–175 (LQ), Gln190, and His195.

Belongs to the methyltransferase superfamily. NTM1 family.

It is found in the nucleus. The enzyme catalyses N-terminal L-alanyl-L-prolyl-L-lysyl-[protein] + S-adenosyl-L-methionine = N-terminal N-methyl-L-alanyl-L-prolyl-L-lysyl-[protein] + S-adenosyl-L-homocysteine + H(+). It carries out the reaction N-terminal L-prolyl-L-prolyl-L-lysyl-[protein] + S-adenosyl-L-methionine = N-terminal N-methyl-L-prolyl-L-prolyl-L-lysyl-[protein] + S-adenosyl-L-homocysteine + H(+). The catalysed reaction is N-terminal L-seryl-L-prolyl-L-lysyl-[protein] + S-adenosyl-L-methionine = N-terminal N-methyl-L-seryl-L-prolyl-L-lysyl-[protein] + S-adenosyl-L-homocysteine + H(+). In terms of biological role, alpha N-methyltransferase that methylates the N-terminus of target proteins containing the N-terminal motif [Ala/Pro/Ser]-Pro-Lys when the initiator Met is cleaved. Specifically catalyzes monomethylation of exposed alpha-amino group of Ala or Ser residue in the [Ala/Ser]-Pro-Lys motif and Pro in the Pro-Pro-Lys motif. Predominantly functions as a mono-methyltransferase but is also able to di-/tri-methylate the GPKRIA peptide and di-methylate the PPKRIA peptide (in vitro). May activate NTMT1 by priming its substrates for trimethylation. The polypeptide is N-terminal Xaa-Pro-Lys N-methyltransferase 2 (Homo sapiens (Human)).